The following is a 320-amino-acid chain: Zinc finger protein 330 (320 aa).

A disordered region spans residues 1–23; that stretch reads MPKKKTGARKKAENRREREKQLR. The short motif at 3–11 is the Nuclear localization signal element; it reads KKKTGARKK. Basic and acidic residues predominate over residues 10–22; the sequence is KKAENRREREKQL. C4-type zinc fingers lie at residues 42–58, 67–104, 129–149, and 175–189; these read CDKC…CYFC, CAQC…CDFC, CVEC…CSFC, and CVSC…CLRC. Disordered regions lie at residues 206-250 and 264-303; these read EKGK…ASGY and GASY…TNLN. The segment covering 216–225 has biased composition (basic and acidic residues); the sequence is CGHETQETKD. A compositionally biased stretch (acidic residues) spans 269 to 287; it reads DEEEDEYEAEDDEEEEDEG. Phosphoserine is present on Ser291.

It belongs to the NOA36 family.

Its subcellular location is the nucleus. The protein resides in the nucleolus. It localises to the chromosome. It is found in the centromere. The chain is Zinc finger protein 330 (ZNF330) from Bos taurus (Bovine).